We begin with the raw amino-acid sequence, 202 residues long: Dephospho-CoA kinase (202 aa).

Residues 3–201 (AIGLTGGIGS…QRYLGFAAAA (199 aa)) form the DPCK domain. 11 to 16 (GSGKTT) is a binding site for ATP.

Belongs to the CoaE family.

It is found in the cytoplasm. It carries out the reaction 3'-dephospho-CoA + ATP = ADP + CoA + H(+). It participates in cofactor biosynthesis; coenzyme A biosynthesis; CoA from (R)-pantothenate: step 5/5. Catalyzes the phosphorylation of the 3'-hydroxyl group of dephosphocoenzyme A to form coenzyme A. This Burkholderia lata (strain ATCC 17760 / DSM 23089 / LMG 22485 / NCIMB 9086 / R18194 / 383) protein is Dephospho-CoA kinase.